The following is a 215-amino-acid chain: uncharacterized protein (215 aa).

This sequence belongs to the HAD-like hydrolase superfamily. CbbY/CbbZ/Gph/YieH family.

This is an uncharacterized protein from Lacticaseibacillus casei (Lactobacillus casei).